Here is a 228-residue protein sequence, read N- to C-terminus: MTRHSRPIIAVVPAAGVGSRMQADKPKQYLTLLGKTLLEHTLEVLLSYTPIQQIILAVAENDPYLDQLDVIRQPKIKIVQGGRDRAGSVFNGLKAITQPHAWVMVHDAARPCLTHEDLDKLLQIEDDNGGILAIPAVDTIKRASAEKQIIQTEDRSQLWQAQTPQFFRADLLYRALQQAFEHGLAVTDEASAMEFAGFRPHLVAGRSDNLKVTRPEDLKLAEFYLSRK.

The protein belongs to the IspD/TarI cytidylyltransferase family. IspD subfamily.

It carries out the reaction 2-C-methyl-D-erythritol 4-phosphate + CTP + H(+) = 4-CDP-2-C-methyl-D-erythritol + diphosphate. Its pathway is isoprenoid biosynthesis; isopentenyl diphosphate biosynthesis via DXP pathway; isopentenyl diphosphate from 1-deoxy-D-xylulose 5-phosphate: step 2/6. Functionally, catalyzes the formation of 4-diphosphocytidyl-2-C-methyl-D-erythritol from CTP and 2-C-methyl-D-erythritol 4-phosphate (MEP). The polypeptide is 2-C-methyl-D-erythritol 4-phosphate cytidylyltransferase (Mannheimia succiniciproducens (strain KCTC 0769BP / MBEL55E)).